A 358-amino-acid chain; its full sequence is Glyoxylate/succinic semialdehyde reductase 2, chloroplastic (358 aa).

Residues 1–44 constitute a chloroplast transit peptide; that stretch reads MPLVSLSFASSSSKAMALCSICPRIPLRFRPKPISPFLSKPQIC. Residues 70–84 and T161 contribute to the NADP(+) site; that span reads GFLG…MAQN. Residue K236 is part of the active site. K304 contributes to the NADP(+) binding site.

Belongs to the HIBADH-related family. NP60 subfamily.

The protein resides in the plastid. Its subcellular location is the chloroplast stroma. It carries out the reaction glycolate + NADP(+) = glyoxylate + NADPH + H(+). The enzyme catalyses 4-hydroxybutanoate + NADP(+) = succinate semialdehyde + NADPH + H(+). Its activity is regulated as follows. The ratio of NADPH/NADP(+) may regulate enzymatic activity. In terms of biological role, catalyzes the NADPH-dependent reduction of glyoxylate to glycolate as well as succinic semialdehyde (SSA) to gamma-hydroxybutyrate in vitro. May function in redox homeostasis and play a role in oxidative stress tolerance by detoxifying glyoxylate and SSA generated in glycolate metabolism and GABA metabolism, respectively. The sequence is that of Glyoxylate/succinic semialdehyde reductase 2, chloroplastic (GLYR2) from Arabidopsis thaliana (Mouse-ear cress).